A 254-amino-acid polypeptide reads, in one-letter code: MEGDGDKLQSAVIVPRHIALVMDGNGRWAKIRGKERCEGHAAGVDALRVALRAAAGCGVEYLTAYTFSTENWNRPEEEVRALMGLFVTAIMNEMLDLMTNNIRLLAIGDFSRLPEDVRESLEKGIRETAGNTGLTLVLALSYSSRWEMTDVIRRLARKVRDGSVEPEDINVDLVSDHLSTAGIPDPDLFIRTGGEKRISNFLMWQMAYTELFFTDTLWPDFDADCLKAAIEEYSSRERRFGKTSEQIALRENKY.

Asp23 is a catalytic residue. Asp23 contributes to the Mg(2+) binding site. Substrate-binding positions include Gly24–Arg27, Trp28, Arg36, His40, and Ser68–Glu70. Catalysis depends on Asn71, which acts as the Proton acceptor. Substrate-binding positions include Trp72, Arg74, Arg191, and Arg197 to Ser199. Glu210 is a Mg(2+) binding site.

Belongs to the UPP synthase family. Homodimer. It depends on Mg(2+) as a cofactor.

Its function is as follows. Catalyzes the condensation of isopentenyl diphosphate (IPP) with allylic pyrophosphates generating different type of terpenoids. This is Isoprenyl transferase from Porphyromonas gingivalis (strain ATCC BAA-308 / W83).